Consider the following 158-residue polypeptide: Small ribosomal subunit protein uS7 (158 aa).

Belongs to the universal ribosomal protein uS7 family. Part of the 30S ribosomal subunit. Contacts proteins S9 and S11.

In terms of biological role, one of the primary rRNA binding proteins, it binds directly to 16S rRNA where it nucleates assembly of the head domain of the 30S subunit. Is located at the subunit interface close to the decoding center, probably blocks exit of the E-site tRNA. The protein is Small ribosomal subunit protein uS7 of Gluconobacter oxydans (strain 621H) (Gluconobacter suboxydans).